The following is a 199-amino-acid chain: dITP/XTP pyrophosphatase (199 aa).

7–12 (SNNPGK) is a substrate binding site. The active-site Proton acceptor is Asp68. Asp68 contacts Mg(2+). Substrate contacts are provided by residues Ala69, 154 to 157 (FGFD), Lys177, and 182 to 183 (HR).

This sequence belongs to the HAM1 NTPase family. In terms of assembly, homodimer. The cofactor is Mg(2+).

The enzyme catalyses XTP + H2O = XMP + diphosphate + H(+). It catalyses the reaction dITP + H2O = dIMP + diphosphate + H(+). The catalysed reaction is ITP + H2O = IMP + diphosphate + H(+). In terms of biological role, pyrophosphatase that catalyzes the hydrolysis of nucleoside triphosphates to their monophosphate derivatives, with a high preference for the non-canonical purine nucleotides XTP (xanthosine triphosphate), dITP (deoxyinosine triphosphate) and ITP. Seems to function as a house-cleaning enzyme that removes non-canonical purine nucleotides from the nucleotide pool, thus preventing their incorporation into DNA/RNA and avoiding chromosomal lesions. This is dITP/XTP pyrophosphatase from Verminephrobacter eiseniae (strain EF01-2).